Consider the following 48-residue polypeptide: uncharacterized protein (48 aa).

It is found in the mitochondrion. This is an uncharacterized protein from Emericella nidulans (Aspergillus nidulans).